A 493-amino-acid polypeptide reads, in one-letter code: Cobyric acid synthase (493 aa).

Residues 246-440 (PIDIAVIKMP…IHGVFDGVVF (195 aa)) form the GATase cobBQ-type domain. Cys-326 (nucleophile) is an active-site residue. His-432 is a catalytic residue.

It belongs to the CobB/CobQ family. CobQ subfamily.

It participates in cofactor biosynthesis; adenosylcobalamin biosynthesis. Functionally, catalyzes amidations at positions B, D, E, and G on adenosylcobyrinic A,C-diamide. NH(2) groups are provided by glutamine, and one molecule of ATP is hydrogenolyzed for each amidation. This chain is Cobyric acid synthase, found in Clostridium botulinum (strain Kyoto / Type A2).